The chain runs to 136 residues: Nucleoside diphosphate kinase (136 aa).

ATP is bound by residues Lys-10, Phe-58, Arg-86, Thr-92, Arg-104, and Asn-114. His-117 (pros-phosphohistidine intermediate) is an active-site residue.

Belongs to the NDK family. In terms of assembly, homotetramer. Requires Mg(2+) as cofactor.

Its subcellular location is the cytoplasm. The catalysed reaction is a 2'-deoxyribonucleoside 5'-diphosphate + ATP = a 2'-deoxyribonucleoside 5'-triphosphate + ADP. It catalyses the reaction a ribonucleoside 5'-diphosphate + ATP = a ribonucleoside 5'-triphosphate + ADP. Functionally, major role in the synthesis of nucleoside triphosphates other than ATP. The ATP gamma phosphate is transferred to the NDP beta phosphate via a ping-pong mechanism, using a phosphorylated active-site intermediate. The chain is Nucleoside diphosphate kinase from Corynebacterium jeikeium (strain K411).